A 63-amino-acid chain; its full sequence is Large ribosomal subunit protein uL29 (63 aa).

This sequence belongs to the universal ribosomal protein uL29 family.

This is Large ribosomal subunit protein uL29 from Psychromonas ingrahamii (strain DSM 17664 / CCUG 51855 / 37).